The primary structure comprises 242 residues: Protein HTATIP2 (242 aa).

An N-acetylalanine modification is found at Ala2. The tract at residues 2–25 (AETEALSKLREDFRMQNKSVFILG) is required for interaction with elongation factor EEF1A1. Residues Ser27, Gly28, Glu29, Thr30, Arg52, Arg53, Leu92, Gly93, Tyr143, Lys147, and Arg178 each contribute to the NADPH site. Catalysis depends on Tyr143, which acts as the Proton acceptor. Lys147 is an active-site residue.

Monomer. Forms homodimers during oxidative stress. Interacts (via N-terminus) with elongation factor EEF1A1 (via middle-region); the interaction is direct and competes with EEF1A1 binding to guanyl-nucleotide exchange factor EEF1B2, thereby inhibiting GDP for GTP exchange and reactivation of EEF1A1. Interacts with nuclear transport receptors XPO4, IPO5/RANBP5, IPO7, IPO9 and KPNB1 as well as GCN1L1/GCN1 and LRPPRC probably through their HEAT repeats. Binds NCOA5/CIA.

The protein localises to the cytoplasm. Functionally, represses translation by preventing reactivation of elongation factor eEF1A. May also inhibit nuclear import by competing with nuclear import substrates for binding to a subset of nuclear transport receptors. Has additionally been proposed to act as a redox sensor involved in cellular oxidative stress surveillance. The chain is Protein HTATIP2 (HTATIP2) from Pan paniscus (Pygmy chimpanzee).